Here is a 549-residue protein sequence, read N- to C-terminus: Glutamyl-tRNA(Gln) amidotransferase subunit B, chloroplastic/mitochondrial (549 aa).

It belongs to the GatB/GatE family. GatB subfamily. As to quaternary structure, subunit of the heterotrimeric GatCAB amidotransferase (AdT) complex, composed of A, B and C subunits.

The protein localises to the mitochondrion. The protein resides in the plastid. Its subcellular location is the chloroplast. It carries out the reaction L-glutamyl-tRNA(Gln) + L-glutamine + ATP + H2O = L-glutaminyl-tRNA(Gln) + L-glutamate + ADP + phosphate + H(+). Allows the formation of correctly charged Gln-tRNA(Gln) through the transamidation of misacylated Glu-tRNA(Gln) in chloroplasts and mitochondria. The reaction takes place in the presence of glutamine and ATP through an activated gamma-phospho-Glu-tRNA(Gln). This chain is Glutamyl-tRNA(Gln) amidotransferase subunit B, chloroplastic/mitochondrial, found in Ricinus communis (Castor bean).